A 172-amino-acid chain; its full sequence is Adenine phosphoribosyltransferase (172 aa).

It belongs to the purine/pyrimidine phosphoribosyltransferase family. In terms of assembly, homodimer.

Its subcellular location is the cytoplasm. It carries out the reaction AMP + diphosphate = 5-phospho-alpha-D-ribose 1-diphosphate + adenine. Its pathway is purine metabolism; AMP biosynthesis via salvage pathway; AMP from adenine: step 1/1. Its function is as follows. Catalyzes a salvage reaction resulting in the formation of AMP, that is energically less costly than de novo synthesis. The polypeptide is Adenine phosphoribosyltransferase (Streptococcus pyogenes serotype M12 (strain MGAS9429)).